Here is a 162-residue protein sequence, read N- to C-terminus: Phosphopantetheine adenylyltransferase (162 aa).

Position 11 (serine 11) interacts with substrate. Residues 11 to 12 (SF) and histidine 19 contribute to the ATP site. Substrate contacts are provided by lysine 43, valine 76, and arginine 90. Residues 91-93 (GLR), glutamate 101, and 126-132 (LKFVSSS) each bind ATP.

The protein belongs to the bacterial CoaD family. As to quaternary structure, homohexamer. Mg(2+) is required as a cofactor.

It localises to the cytoplasm. It carries out the reaction (R)-4'-phosphopantetheine + ATP + H(+) = 3'-dephospho-CoA + diphosphate. Its pathway is cofactor biosynthesis; coenzyme A biosynthesis; CoA from (R)-pantothenate: step 4/5. Functionally, reversibly transfers an adenylyl group from ATP to 4'-phosphopantetheine, yielding dephospho-CoA (dPCoA) and pyrophosphate. This chain is Phosphopantetheine adenylyltransferase, found in Streptococcus suis (strain 05ZYH33).